Consider the following 164-residue polypeptide: Cell division protein SepF (164 aa).

Residues 21-71 form a disordered region; sequence YQQGQQPAQQQQSPVQAVPTPAPAPQQQAKRAPVTPLHKPSTTTRNAAPAE. Positions 22 to 54 are enriched in low complexity; the sequence is QQGQQPAQQQQSPVQAVPTPAPAPQQQAKRAPV.

It belongs to the SepF family. Homodimer. Interacts with FtsZ.

The protein localises to the cytoplasm. Cell division protein that is part of the divisome complex and is recruited early to the Z-ring. Probably stimulates Z-ring formation, perhaps through the cross-linking of FtsZ protofilaments. Its function overlaps with FtsA. In Clavibacter michiganensis subsp. michiganensis (strain NCPPB 382), this protein is Cell division protein SepF.